The following is a 378-amino-acid chain: Histidinol-phosphate aminotransferase 2 (378 aa).

Lys240 carries the N6-(pyridoxal phosphate)lysine modification.

It belongs to the class-II pyridoxal-phosphate-dependent aminotransferase family. Histidinol-phosphate aminotransferase subfamily. In terms of assembly, homodimer. Requires pyridoxal 5'-phosphate as cofactor.

It carries out the reaction L-histidinol phosphate + 2-oxoglutarate = 3-(imidazol-4-yl)-2-oxopropyl phosphate + L-glutamate. The protein operates within amino-acid biosynthesis; L-histidine biosynthesis; L-histidine from 5-phospho-alpha-D-ribose 1-diphosphate: step 7/9. The sequence is that of Histidinol-phosphate aminotransferase 2 (hisC2) from Caulobacter vibrioides (strain ATCC 19089 / CIP 103742 / CB 15) (Caulobacter crescentus).